The sequence spans 370 residues: Probable protein phosphatase 2C 67 (370 aa).

The region spanning 35 to 344 is the PPM-type phosphatase domain; that stretch reads TFGEFSMAMI…DDITVIVVYL (310 aa). 4 residues coordinate Mn(2+): Asp77, Gly78, Asp276, and Asp335.

It belongs to the PP2C family. In terms of assembly, interacts with SAUR19. Interacts with AHA2 at the plasma membrane. Requires Mg(2+) as cofactor. Mn(2+) is required as a cofactor.

The protein resides in the cell membrane. It carries out the reaction O-phospho-L-seryl-[protein] + H2O = L-seryl-[protein] + phosphate. The catalysed reaction is O-phospho-L-threonyl-[protein] + H2O = L-threonyl-[protein] + phosphate. In terms of biological role, dephosphorylates and represses plasma membrane H(+)-ATPases (PM H(+)-ATPases, e.g. AHA1 and AHA2), thus influencing negatively plant growth and fitness. Promotes the apical hook maintenance of etiolated seedlings. The polypeptide is Probable protein phosphatase 2C 67 (Arabidopsis thaliana (Mouse-ear cress)).